Here is a 331-residue protein sequence, read N- to C-terminus: MRPALAVGLVFAGCCSNVIFLELLARKHPGCGNIVTFAQFLFIAVEGFLFEADLGRKPPAIPIRYYAIMVTMFFTVSVVNNYALNLNIAMPLHMIFRSGSLIANMILGIIILKKRYSIFKYTSIALVSVGIFICTFMSAKQVTSQSSLSENDGFQAFVWWLLGIGALTFALLMSARMGIFQETLYKRFGKHSKEALFYNHALPLPGFVFLASDIYDHAVLFNKSELYEIPVIGVTLPIMWFYLLMNIITQYVCIRGVFILTTECASLTVTLVVTLRKFVSLIFSILYFQNPFTLWHWLGTLFVFIGTLMYTEVWNNLGTTKSEPQKDSKKN.

11 helical membrane-spanning segments follow: residues 4-24 (ALAV…LELL), 30-50 (GCGN…GFLF), 59-79 (PAIP…VSVV), 92-112 (LHMI…IIIL), 117-137 (SIFK…CTFM), 153-173 (GFQA…ALLM), 201-221 (ALPL…AVLF), 229-249 (IPVI…NIIT), 251-267 (YVCI…CASL), 268-288 (TVTL…ILYF), and 291-311 (PFTL…LMYT). Positions 326-331 (KDSKKN) match the Mediates endoplasmic reticulum retention motif.

The protein belongs to the nucleotide-sugar transporter family. SLC35B subfamily.

It is found in the endoplasmic reticulum membrane. The catalysed reaction is UDP-N-acetyl-alpha-D-glucosamine(in) + UDP-alpha-D-glucuronate(out) = UDP-N-acetyl-alpha-D-glucosamine(out) + UDP-alpha-D-glucuronate(in). It carries out the reaction UDP-alpha-D-xylose(in) + UDP-alpha-D-glucuronate(out) = UDP-alpha-D-xylose(out) + UDP-alpha-D-glucuronate(in). In terms of biological role, antiporter that transports nucleotide sugars across the endoplasmic reticulum (ER) membrane in exchange for another nucleotide sugar. May couple UDP-alpha-D-glucuronate (UDP-GlcA) or UDP-alpha-D-xylose (UDP-Xyl) efflux to UDP-alpha-D-glucuronate (UDP-GlcA) influx into the ER lumen, which in turn stimulates glucuronidation and excretion of endobiotics and xenobiotics. Has UDP-GlcA:UDP-GlcNAc antiporter activity. The chain is Nucleotide sugar transporter SLC35B4 (SLC35B4) from Homo sapiens (Human).